Consider the following 679-residue polypeptide: Enzymatic polyprotein (679 aa).

Positions 40 to 130 (LHCFVDTGAS…LYEPFIQFTD (91 aa)) are protease. Residue D45 is part of the active site. Residues 272-452 (LKVIKPSKSP…KKINFLGLEI (181 aa)) enclose the Reverse transcriptase domain.

It belongs to the caulimoviridae enzymatic polyprotein family.

The catalysed reaction is DNA(n) + a 2'-deoxyribonucleoside 5'-triphosphate = DNA(n+1) + diphosphate. Functionally, encodes for at least two polypeptides: protease (PR) and reverse transcriptase (RT). The protease processes the polyprotein in cis. Reverse transcriptase is multifunctional enzyme that converts the viral RNA genome into dsDNA in viral cytoplasmic capsids. This enzyme displays a DNA polymerase activity that can copy either DNA or RNA templates, and a ribonuclease H (RNase H) activity that cleaves the RNA strand of RNA-DNA heteroduplexes in a partially processive 3'- to 5'-endonucleasic mode. Neo-synthesized pregenomic RNA (pgRNA) are encapsidated, and reverse-transcribed inside the nucleocapsid. Partial (+)DNA is synthesized from the (-)DNA template and generates the relaxed circular DNA (RC-DNA) genome. After budding and infection, the RC-DNA migrates in the nucleus, and is converted into a plasmid-like covalently closed circular DNA (cccDNA). The protein is Enzymatic polyprotein of Arabidopsis thaliana (Mouse-ear cress).